A 304-amino-acid polypeptide reads, in one-letter code: MDPTSSSSSALRWKILRQALLRRSDSQSQTETKRISRKATQGFNLIPCQVVDSSPQSDKSREASVCYTLPITGSPKLYLTQRVDNCSDLNDFEISNRYNIDNTGLVCQWPSEEVLAYFCKSQPERFRGKRVIELGSGYGLAGLVIAAATEASEVVISDGNPQVVNYIKRNIETNSMAFGGTSVKAMELHWNQHQLSELTNTFDIIVASDCTFFKEFHKDLARTIKMLLKAKKASEALFFSPKRGDSLEKFMKEIKDIGLHYILTENYDAQVWKRHETLVKGDEAWPNYDKNHCYPLLIQITNQI.

Belongs to the class I-like SAM-binding methyltransferase superfamily. CLNMT methyltransferase family. Monomer. Expressed in discreet spatial and tissue-specific patterns including root tips, leaves-tips, floral buds, stamens, hydathodes, stigma, anther, siliques, apical meristems and germinating seeds. Also observed at high levels in the root stele region.

It is found in the cytoplasm. Its subcellular location is the nucleus. It carries out the reaction [calmodulin]-L-lysine + S-adenosyl-L-methionine = [calmodulin]-N(6)-methyl-L-lysine + S-adenosyl-L-homocysteine + H(+). Its function is as follows. Catalyzes the trimethylation of calmodulin. Regulates roots development probably by modulating auxin signaling responses. May be involved in gravitropism. Involved in abscisic acid (ABA)-mediated and abiotic stress responses, including salt (NaCl), cold, drought and heat stresses. The sequence is that of Calmodulin-lysine N-methyltransferase from Arabidopsis thaliana (Mouse-ear cress).